The sequence spans 827 residues: Beta-galactosidase 1 (827 aa).

The N-terminal stretch at 1-25 (MMGRRGSSWCRWWVALLVLAVAADA) is a signal peptide. Glu-187 functions as the Proton donor in the catalytic mechanism. N-linked (GlcNAc...) asparagine glycosylation is found at Asn-198 and Asn-249. Glu-259 (nucleophile) is an active-site residue. 8 N-linked (GlcNAc...) asparagine glycosylation sites follow: Asn-260, Asn-366, Asn-392, Asn-502, Asn-520, Asn-578, Asn-586, and Asn-615. The SUEL-type lectin domain occupies 746-827 (GEAGDAVTLS…SGVLTVQATC (82 aa)).

This sequence belongs to the glycosyl hydrolase 35 family.

It localises to the secreted. The protein localises to the extracellular space. Its subcellular location is the apoplast. The enzyme catalyses Hydrolysis of terminal non-reducing beta-D-galactose residues in beta-D-galactosides.. The protein is Beta-galactosidase 1 of Oryza sativa subsp. japonica (Rice).